A 635-amino-acid polypeptide reads, in one-letter code: CCR4-NOT transcription complex subunit 10 (635 aa).

Position 45 is a phosphothreonine (Thr45). Positions 131–165 form a coiled coil; the sequence is LVARLEALEKAMAALVATLQLQLLLATNQLNRAEA. Disordered regions lie at residues 396 to 416 and 450 to 474; these read EERQSQSETPSTKPYAPQSAG and SEDVEAPEPKDPTQESWRHPQDNNF. Over residues 456–470 the composition is skewed to basic and acidic residues; the sequence is PEPKDPTQESWRHPQ.

It belongs to the CNOT10 family. As to quaternary structure, component of the CCR4-NOT complex. CNOT10 and CNOT11 form a subcomplex docked to the CNOT1 scaffold.

It localises to the cytoplasm. The protein localises to the nucleus. In terms of biological role, component of the CCR4-NOT complex which is one of the major cellular mRNA deadenylases and is linked to various cellular processes including bulk mRNA degradation, miRNA-mediated repression, translational repression during translational initiation and general transcription regulation. Additional complex functions may be a consequence of its influence on mRNA expression. Is not required for association of CNOT7 to the CCR4-NOT complex. In Drosophila melanogaster (Fruit fly), this protein is CCR4-NOT transcription complex subunit 10 (Not10).